A 114-amino-acid chain; its full sequence is Hydrogenase maturation factor HypA (114 aa).

A Ni(2+)-binding site is contributed by histidine 2. The Zn(2+) site is built by cysteine 70, cysteine 73, cysteine 86, and cysteine 89.

It belongs to the HypA/HybF family.

Its function is as follows. Involved in the maturation of [NiFe] hydrogenases. Required for nickel insertion into the metal center of the hydrogenase. The polypeptide is Hydrogenase maturation factor HypA (Crocosphaera subtropica (strain ATCC 51142 / BH68) (Cyanothece sp. (strain ATCC 51142))).